The following is a 256-amino-acid chain: Indole-3-glycerol phosphate synthase (256 aa).

It belongs to the TrpC family.

It catalyses the reaction 1-(2-carboxyphenylamino)-1-deoxy-D-ribulose 5-phosphate + H(+) = (1S,2R)-1-C-(indol-3-yl)glycerol 3-phosphate + CO2 + H2O. It participates in amino-acid biosynthesis; L-tryptophan biosynthesis; L-tryptophan from chorismate: step 4/5. This chain is Indole-3-glycerol phosphate synthase, found in Caldanaerobacter subterraneus subsp. tengcongensis (strain DSM 15242 / JCM 11007 / NBRC 100824 / MB4) (Thermoanaerobacter tengcongensis).